Consider the following 99-residue polypeptide: MAEKDIDKLLSLTDSKYRLSVVIAKRALQLRSGAPSVLPVEQRVRTRNLVTQAMRELATGKLTVGTGLMDENRFHQDYVRQKQAQLQAQLNAERERERD.

It belongs to the RNA polymerase subunit omega family. In terms of assembly, the RNAP catalytic core consists of 2 alpha, 1 beta, 1 beta' and 1 omega subunit. When a sigma factor is associated with the core the holoenzyme is formed, which can initiate transcription.

It catalyses the reaction RNA(n) + a ribonucleoside 5'-triphosphate = RNA(n+1) + diphosphate. Promotes RNA polymerase assembly. Latches the N- and C-terminal regions of the beta' subunit thereby facilitating its interaction with the beta and alpha subunits. The chain is DNA-directed RNA polymerase subunit omega from Deinococcus geothermalis (strain DSM 11300 / CIP 105573 / AG-3a).